Consider the following 1037-residue polypeptide: Protein brain tumor (1037 aa).

Disordered regions lie at residues 29 to 63 (SDSPLTLSGSSPPASDSAICSDEYTGGSSVKSRSE) and 159 to 178 (SNSSSNSSSSNTSANGSPPR). 2 stretches are compositionally biased toward polar residues: residues 31-42 (SPLTLSGSSPPA) and 54-63 (GGSSVKSRSE). Residues 159–175 (SNSSSNSSSSNTSANGS) show a composition bias toward low complexity. The B box-type 1; atypical zinc-finger motif lies at 174-222 (GSPPRCTACKSKCSDAVAKCFECQSYLCANCVTAHEFMHCFNGHNVCLI). 8 residues coordinate Zn(2+): Cys179, Cys182, Cys204, His208, Cys328, His331, Cys351, and His356. A B box-type 2 zinc finger spans residues 323 to 366 (QRQLFCPRHKQELLKFSCRTCCILVCKECIVLEHSTGLHELENV). Residues 543–554 (GPTGMSLTSNGH) show a composition bias toward polar residues. A disordered region spans residues 543–606 (GPTGMSLTSN…TAHHQQLQAQ (64 aa)). Low complexity predominate over residues 565–577 (QSASNSSASSAGS). Basic residues predominate over residues 579–598 (HHGHHQQSHHHGHHNHHQTA). 5 NHL repeats span residues 767 to 810 (HCKF…FDKE), 814 to 859 (KFQF…YNQY), 860 to 901 (GQFV…FDQN), 902 to 944 (GNVL…FNYE), and 945 to 988 (GQYL…FTQD).

In terms of assembly, interacts with nanos (nos) and pum. Acts via the formation of a quaternary complex composed of pum, nanos, brat and the 3'-UTR mRNA of hb. Not recruited by nanos and pum to cyclin B 3'-UTR mRNA. Might interact with mira; the interaction seems to be important for brat localization during mitosis. Interacts with Ago1. In terms of tissue distribution, expressed during embryogenesis, mainly in nervous tissues. Expressed in the embryonic central and peripheral nervous systems including the embryonic brain. In third instar larva it is expressed in the larval central nervous system including the brain and the ventral ganglion, in two glands (the ring gland and the salivary gland, and in parts of the foregut) the gastric caeca and the proventriculus.

It localises to the cytoplasm. The protein localises to the cell cortex. Functionally, a NHL-domain family protein that functions as a translational repressor to inhibit cell proliferation. Plays a central role in translation repression of hb mRNA by being recruited by nanos (nos) and pum to the Nanos Response Element (NRE), a 16 bp sequence in the hb mRNA 3'-UTR. Probably recruited by other proteins to repress translation of other mRNAs in other tissues. Negatively regulates expression of Myc in a 3'-UTR dependent manner in both neural progenitor and epithelial cells. Regulates expression of mei-P26, possibly at transcriptional level. Involved in the regulation of ribosomal RNA synthesis and cell growth. Participates in abdominal segmentation and imaginal disk development. During neuroblast division, segregates asymmetrically and inhibits self-renewal of one of the two daughter cells. Together with the asymmetrically segregating transcription factor prospero ensures that the daughter cell will stop growing, exit the cell cycle, and differentiate into neurons possibly by modulating the function of dm in ganglion mother cells (GMC). Restricts developmental potential of type II intermediary neuronal progenitor (INP) cells playing a role in proliferation and maturation of the neuroblasts. The polypeptide is Protein brain tumor (Drosophila melanogaster (Fruit fly)).